Consider the following 94-residue polypeptide: Large ribosomal subunit protein bL27 (94 aa).

The propeptide occupies 1-9 (MLKLNLQFF). The interval 13 to 32 (KGLGSTKNGRDSESKRLGAK) is disordered. A compositionally biased stretch (basic and acidic residues) spans 20–32 (NGRDSESKRLGAK).

It belongs to the bacterial ribosomal protein bL27 family. The N-terminus is cleaved by ribosomal processing cysteine protease Prp.

The polypeptide is Large ribosomal subunit protein bL27 (Staphylococcus saprophyticus subsp. saprophyticus (strain ATCC 15305 / DSM 20229 / NCIMB 8711 / NCTC 7292 / S-41)).